Reading from the N-terminus, the 346-residue chain is Ketol-acid reductoisomerase (NADP(+)) (346 aa).

A KARI N-terminal Rossmann domain is found at 1–141; sequence KKNSILKKNQ…GAHHAGVLES (141 aa). NADP(+) contacts are provided by residues S11 and 41–43; that span reads DKQ. H65 is a catalytic residue. G91 lines the NADP(+) pocket. KARI C-terminal knotted domains follow at residues 142–286 and 287–346; these read SFVA…PEQE and YYDH…NKVI. Mg(2+)-binding residues include D150, E154, E322, and E326.

Belongs to the ketol-acid reductoisomerase family. Mg(2+) serves as cofactor.

The catalysed reaction is (2R)-2,3-dihydroxy-3-methylbutanoate + NADP(+) = (2S)-2-acetolactate + NADPH + H(+). It carries out the reaction (2R,3R)-2,3-dihydroxy-3-methylpentanoate + NADP(+) = (S)-2-ethyl-2-hydroxy-3-oxobutanoate + NADPH + H(+). Its pathway is amino-acid biosynthesis; L-isoleucine biosynthesis; L-isoleucine from 2-oxobutanoate: step 2/4. The protein operates within amino-acid biosynthesis; L-valine biosynthesis; L-valine from pyruvate: step 2/4. Involved in the biosynthesis of branched-chain amino acids (BCAA). Catalyzes an alkyl-migration followed by a ketol-acid reduction of (S)-2-acetolactate (S2AL) to yield (R)-2,3-dihydroxy-isovalerate. In the isomerase reaction, S2AL is rearranged via a Mg-dependent methyl migration to produce 3-hydroxy-3-methyl-2-ketobutyrate (HMKB). In the reductase reaction, this 2-ketoacid undergoes a metal-dependent reduction by NADPH to yield (R)-2,3-dihydroxy-isovalerate. The protein is Ketol-acid reductoisomerase (NADP(+)) (ilvC) of Buchnera aphidicola subsp. Uroleucon rurale.